A 189-amino-acid polypeptide reads, in one-letter code: Der GTPase-activating protein YihI (189 aa).

The interval 1–81 is disordered; it reads MARKKKTRRV…ALAKKDPRLG (81 aa). Basic and acidic residues-rich tracts occupy residues 9 to 27 and 35 to 46; these read RVSDIMPARKVDKKVELPK and TRYELDAKARED. Positions 60–71 are enriched in polar residues; it reads RHSATENNNNHQ.

This sequence belongs to the YihI family. In terms of assembly, interacts with Der.

Its function is as follows. A GTPase-activating protein (GAP) that modifies Der/EngA GTPase function. May play a role in ribosome biogenesis. The protein is Der GTPase-activating protein YihI of Pasteurella multocida (strain Pm70).